A 128-amino-acid chain; its full sequence is Peptidyl-prolyl cis-trans isomerase pin4 (128 aa).

The interval 1 to 35 (MGKGNAKNSGGGDKKSKAKAGDAKDDSKGKMKGAQ) is disordered. A compositionally biased stretch (basic and acidic residues) spans 12 to 29 (GDKKSKAKAGDAKDDSKG). The region spanning 34–126 (AQSVNVRHIL…YGYHIIMVEG (93 aa)) is the PpiC domain.

Belongs to the PpiC/parvulin rotamase family. PIN4 subfamily.

It carries out the reaction [protein]-peptidylproline (omega=180) = [protein]-peptidylproline (omega=0). PPIases accelerate the folding of proteins. It catalyzes the cis-trans isomerization of proline imidic peptide bonds in oligopeptides. In Emericella nidulans (strain FGSC A4 / ATCC 38163 / CBS 112.46 / NRRL 194 / M139) (Aspergillus nidulans), this protein is Peptidyl-prolyl cis-trans isomerase pin4 (pin4).